Reading from the N-terminus, the 109-residue chain is Tyrosine-protein phosphatase 4 (109 aa).

Positions 1–109 constitute a Tyrosine-protein phosphatase domain; it reads SKSASIVMLT…QNSGNHPIVI (109 aa). Position 78 (Glu78) interacts with substrate.

The protein belongs to the protein-tyrosine phosphatase family.

It carries out the reaction O-phospho-L-tyrosyl-[protein] + H2O = L-tyrosyl-[protein] + phosphate. This is Tyrosine-protein phosphatase 4 (STY-4) from Styela plicata (Wrinkled sea squirt).